A 226-amino-acid chain; its full sequence is Ras-related protein RGP1 (226 aa).

25–32 (GDSAVGKS) provides a ligand contact to GTP. An Effector region motif is present at residues 47 to 55 (SKATIGVEF). Residues 73–77 (DTAGQ) and 131–134 (NKSD) contribute to the GTP site. S-geranylgeranyl cysteine attachment occurs at residues Cys-223 and Cys-224.

It belongs to the small GTPase superfamily. Rab family.

The protein resides in the cell membrane. In terms of biological role, may play an important role in plant growth and development. The chain is Ras-related protein RGP1 (RGP1) from Oryza sativa subsp. japonica (Rice).